Reading from the N-terminus, the 599-residue chain is Glutamine--fructose-6-phosphate aminotransferase [isomerizing] (599 aa).

Cys-2 functions as the Nucleophile; for GATase activity in the catalytic mechanism. One can recognise a Glutamine amidotransferase type-2 domain in the interval Cys-2–Glu-223. 2 consecutive SIS domains span residues Leu-286 to Lys-423 and Ile-452 to Pro-589. Catalysis depends on Lys-594, which acts as the For Fru-6P isomerization activity.

As to quaternary structure, homodimer.

Its subcellular location is the cytoplasm. The catalysed reaction is D-fructose 6-phosphate + L-glutamine = D-glucosamine 6-phosphate + L-glutamate. Its function is as follows. Catalyzes the first step in hexosamine metabolism, converting fructose-6P into glucosamine-6P using glutamine as a nitrogen source. This Methanococcus maripaludis (strain DSM 14266 / JCM 13030 / NBRC 101832 / S2 / LL) protein is Glutamine--fructose-6-phosphate aminotransferase [isomerizing] (glmS).